The following is a 606-amino-acid chain: Fructan 6-exohydrolase (606 aa).

The signal sequence occupies residues Met1–Gly21. N-linked (GlcNAc...) asparagine glycosylation is present at Asn5. Asp70 is an active-site residue. Residues Asn110, Asn164, Asn193, Asn237, and Asn346 are each glycosylated (N-linked (GlcNAc...) asparagine). Residues Cys445 and Cys491 are joined by a disulfide bond. N-linked (GlcNAc...) asparagine glycans are attached at residues Asn564, Asn585, Asn590, and Asn593.

The protein belongs to the glycosyl hydrolase 32 family.

The enzyme catalyses Hydrolysis of terminal, non-reducing (2-&gt;6)-linked beta-D-fructofuranose residues in fructans.. Its activity is regulated as follows. Not inhibited by sucrose. Hydrolyzes levan-type beta-(2-&gt;6)-linked fructans to fructose, but not inulin-type beta-(2-&gt;1)-linked fructans. The sequence is that of Fructan 6-exohydrolase from Beta vulgaris (Sugar beet).